Reading from the N-terminus, the 294-residue chain is Ribosomal RNA small subunit methyltransferase I (294 aa).

The protein belongs to the methyltransferase superfamily. RsmI family.

The protein resides in the cytoplasm. The enzyme catalyses cytidine(1402) in 16S rRNA + S-adenosyl-L-methionine = 2'-O-methylcytidine(1402) in 16S rRNA + S-adenosyl-L-homocysteine + H(+). Its function is as follows. Catalyzes the 2'-O-methylation of the ribose of cytidine 1402 (C1402) in 16S rRNA. This Mesorhizobium japonicum (strain LMG 29417 / CECT 9101 / MAFF 303099) (Mesorhizobium loti (strain MAFF 303099)) protein is Ribosomal RNA small subunit methyltransferase I.